The sequence spans 583 residues: L-galactono-1,4-lactone dehydrogenase 2, mitochondrial (583 aa).

A mitochondrion-targeting transit peptide spans 1-36 (MRRLLLAGILRRASSSPSSHHHLHLVRALSASSPLP). Residues 37-78 (ASDADLRKYAGYALLLLGCGAATYYSFPLPPDALHKKAVPFK) constitute a propeptide, removed in mature form. The helical transmembrane segment at 45-61 (YAGYALLLLGCGAATYY) threads the bilayer. The FAD-binding PCMH-type domain maps to 95 to 266 (THEVHTRVLL…AEVTLQCVER (172 aa)).

FAD serves as cofactor.

The protein localises to the mitochondrion membrane. The enzyme catalyses L-galactono-1,4-lactone + 4 Fe(III)-[cytochrome c] = L-dehydroascorbate + 4 Fe(II)-[cytochrome c] + 5 H(+). It functions in the pathway cofactor biosynthesis; L-ascorbate biosynthesis. Functionally, involved in the biosynthesis of ascorbic acid. The chain is L-galactono-1,4-lactone dehydrogenase 2, mitochondrial (GLDH2) from Oryza sativa subsp. japonica (Rice).